The sequence spans 142 residues: Hemoglobin subunit theta-1 (142 aa).

A Globin domain is found at 2-142; the sequence is ALAAADRATV…VISALASDCR (141 aa). Residues His59 and His88 each coordinate heme b.

The protein belongs to the globin family.

The protein is Hemoglobin subunit theta-1 (HBQ1) of Equus caballus (Horse).